We begin with the raw amino-acid sequence, 186 residues long: Napin embryo-specific (186 aa).

The N-terminal stretch at Met1–Ala21 is a signal peptide. Propeptides lie at residues Ser22–Pro38 and Pro77–Gly97.

The protein belongs to the 2S seed storage albumins family. In terms of assembly, the mature protein consists of a small and a large chain linked by disulfide bonds. In terms of tissue distribution, cotyledons and the axis.

Functionally, the small, basic, water-soluble napins are one of the two major kinds of storage proteins synthesized in the seed during its maturation. In Brassica napus (Rape), this protein is Napin embryo-specific.